We begin with the raw amino-acid sequence, 305 residues long: MSLEKDEEVVIFEAYLAGSANIFKNLIELLSQVAPIKKSDNSNKSIKQAFFKITKNGIYINIDHQSDILINISLDADKFGSYKYNFSLPELHIGITLDIIKDALKNVKKSEGVALCIRKKTFQTMPNEMSFSISSMDNNNASRGFVVKFNIVQNININAMLDGQELIEMRSNQFLGLCKDMGGSKKQIKVIVHNDSVVFSCNMVDIATKWLSFPIEEEVFQSSIHEKLYFLNHFKSEHIKTITKLATFDDTIKMSCVDDSIVFKSYITRCTPTKARHLPTEYIGKINIWVKAEPKKEISDDEDDL.

Belongs to the IIV-6 436R family.

This is an uncharacterized protein from Acheta domesticus (House cricket).